Reading from the N-terminus, the 447-residue chain is Chorismate synthase, chloroplastic (447 aa).

Residues 1 to 24 (MASSLSTKPFLSGSRRRSTTDGSG) form a disordered region. The N-terminal 57 residues, 1 to 57 (MASSLSTKPFLSGSRRRSTTDGSGWSYFQTSDLRQLSNQSVQISVRRQTAPLKLVVQ), are a transit peptide targeting the chloroplast.

This sequence belongs to the chorismate synthase family. Homotetramer. FMNH2 serves as cofactor. In terms of processing, the N-terminus is blocked.

It is found in the plastid. The protein resides in the chloroplast. It carries out the reaction 5-O-(1-carboxyvinyl)-3-phosphoshikimate = chorismate + phosphate. The protein operates within metabolic intermediate biosynthesis; chorismate biosynthesis; chorismate from D-erythrose 4-phosphate and phosphoenolpyruvate: step 7/7. Its function is as follows. Catalyzes the last common step of the biosynthesis of aromatic amino acids, produced via the shikimic acid pathway. This is Chorismate synthase, chloroplastic from Capnoides sempervirens (Rock-harlequin).